The sequence spans 142 residues: Small ribosomal subunit protein bS18m (142 aa).

Belongs to the bacterial ribosomal protein bS18 family. Component of the mitochondrial small ribosomal subunit (mt-SSU). Mature mammalian 55S mitochondrial ribosomes consist of a small (28S) and a large (39S) subunit. The 28S small subunit contains a 12S ribosomal RNA (12S mt-rRNA) and 30 different proteins. The 39S large subunit contains a 16S rRNA (16S mt-rRNA), a copy of mitochondrial valine transfer RNA (mt-tRNA(Val)), which plays an integral structural role, and 52 different proteins. bS18m has a zinc binding site.

It is found in the mitochondrion. In Homo sapiens (Human), this protein is Small ribosomal subunit protein bS18m (MRPS18C).